A 250-amino-acid polypeptide reads, in one-letter code: 3-deoxy-manno-octulosonate cytidylyltransferase (250 aa).

Belongs to the KdsB family.

It is found in the cytoplasm. The enzyme catalyses 3-deoxy-alpha-D-manno-oct-2-ulosonate + CTP = CMP-3-deoxy-beta-D-manno-octulosonate + diphosphate. The protein operates within nucleotide-sugar biosynthesis; CMP-3-deoxy-D-manno-octulosonate biosynthesis; CMP-3-deoxy-D-manno-octulosonate from 3-deoxy-D-manno-octulosonate and CTP: step 1/1. It functions in the pathway bacterial outer membrane biogenesis; lipopolysaccharide biosynthesis. Activates KDO (a required 8-carbon sugar) for incorporation into bacterial lipopolysaccharide in Gram-negative bacteria. This chain is 3-deoxy-manno-octulosonate cytidylyltransferase, found in Cytophaga hutchinsonii (strain ATCC 33406 / DSM 1761 / CIP 103989 / NBRC 15051 / NCIMB 9469 / D465).